The primary structure comprises 452 residues: 2-succinylbenzoate--CoA ligase (452 aa).

Belongs to the ATP-dependent AMP-binding enzyme family. MenE subfamily.

It carries out the reaction 2-succinylbenzoate + ATP + CoA = 2-succinylbenzoyl-CoA + AMP + diphosphate. The protein operates within quinol/quinone metabolism; 1,4-dihydroxy-2-naphthoate biosynthesis; 1,4-dihydroxy-2-naphthoate from chorismate: step 5/7. It participates in quinol/quinone metabolism; menaquinone biosynthesis. In terms of biological role, converts 2-succinylbenzoate (OSB) to 2-succinylbenzoyl-CoA (OSB-CoA). The protein is 2-succinylbenzoate--CoA ligase of Haemophilus influenzae (strain ATCC 51907 / DSM 11121 / KW20 / Rd).